We begin with the raw amino-acid sequence, 498 residues long: Putative BTB/POZ domain-containing protein L788 (498 aa).

Residues 28–99 form the BTB domain; sequence TDIILVLEDD…FYGQKIKSGN (72 aa).

This sequence belongs to the mimivirus BTB/WD family.

The protein is Putative BTB/POZ domain-containing protein L788 of Acanthamoeba polyphaga (Amoeba).